The following is a 345-amino-acid chain: Phosphate acyltransferase (345 aa).

Belongs to the PlsX family. As to quaternary structure, homodimer. Probably interacts with PlsY.

The protein localises to the cytoplasm. It carries out the reaction a fatty acyl-[ACP] + phosphate = an acyl phosphate + holo-[ACP]. The protein operates within lipid metabolism; phospholipid metabolism. Functionally, catalyzes the reversible formation of acyl-phosphate (acyl-PO(4)) from acyl-[acyl-carrier-protein] (acyl-ACP). This enzyme utilizes acyl-ACP as fatty acyl donor, but not acyl-CoA. The chain is Phosphate acyltransferase from Wolbachia sp. subsp. Drosophila simulans (strain wRi).